A 400-amino-acid chain; its full sequence is tRNA pseudouridine synthase Pus10 (400 aa).

Residues 77 to 194 form the THUMP domain; the sequence is QVYVELFGSP…DGSVSVQPRR (118 aa). Y301 is a binding site for substrate.

Belongs to the pseudouridine synthase Pus10 family.

The catalysed reaction is uridine(54) in tRNA = pseudouridine(54) in tRNA. It catalyses the reaction uridine(55) in tRNA = pseudouridine(55) in tRNA. Functionally, responsible for synthesis of pseudouridine from uracil-54 and uracil-55 in the psi GC loop of transfer RNAs. The chain is tRNA pseudouridine synthase Pus10 from Acidilobus saccharovorans (strain DSM 16705 / JCM 18335 / VKM B-2471 / 345-15).